The following is a 344-amino-acid chain: Ketol-acid reductoisomerase (NADP(+)) (344 aa).

One can recognise a KARI N-terminal Rossmann domain in the interval 2–181; it reads AKVLYEKDIQ…GAARAGVLET (180 aa). NADP(+) contacts are provided by residues 25-28, Arg48, Ser52, and 82-85; these read YGSQ and DEMQ. The active site involves His107. Gly133 contributes to the NADP(+) binding site. A KARI C-terminal knotted domain is found at 182 to 327; the sequence is SFQEETETDL…RELRELMPFV (146 aa). Mg(2+)-binding residues include Asp190, Glu194, Glu226, and Glu230. Ser251 contacts substrate.

It belongs to the ketol-acid reductoisomerase family. Requires Mg(2+) as cofactor.

The enzyme catalyses (2R)-2,3-dihydroxy-3-methylbutanoate + NADP(+) = (2S)-2-acetolactate + NADPH + H(+). It carries out the reaction (2R,3R)-2,3-dihydroxy-3-methylpentanoate + NADP(+) = (S)-2-ethyl-2-hydroxy-3-oxobutanoate + NADPH + H(+). It functions in the pathway amino-acid biosynthesis; L-isoleucine biosynthesis; L-isoleucine from 2-oxobutanoate: step 2/4. Its pathway is amino-acid biosynthesis; L-valine biosynthesis; L-valine from pyruvate: step 2/4. Functionally, involved in the biosynthesis of branched-chain amino acids (BCAA). Catalyzes an alkyl-migration followed by a ketol-acid reduction of (S)-2-acetolactate (S2AL) to yield (R)-2,3-dihydroxy-isovalerate. In the isomerase reaction, S2AL is rearranged via a Mg-dependent methyl migration to produce 3-hydroxy-3-methyl-2-ketobutyrate (HMKB). In the reductase reaction, this 2-ketoacid undergoes a metal-dependent reduction by NADPH to yield (R)-2,3-dihydroxy-isovalerate. This is Ketol-acid reductoisomerase (NADP(+)) from Oceanobacillus iheyensis (strain DSM 14371 / CIP 107618 / JCM 11309 / KCTC 3954 / HTE831).